The chain runs to 108 residues: UPF0060 membrane protein YnfA (108 aa).

The Periplasmic portion of the chain corresponds to Met-1–Thr-5. A helical membrane pass occupies residues Leu-6 to Leu-26. Residues Lys-27–Ala-30 lie on the Cytoplasmic side of the membrane. Residues Ser-31–Leu-51 form a helical membrane-spanning segment. The Periplasmic portion of the chain corresponds to His-52–Tyr-60. Residues Ala-61 to Val-81 traverse the membrane as a helical segment. At Lys-82–Ser-84 the chain is on the cytoplasmic side. A helical transmembrane segment spans residues Leu-85–Trp-105. Residues Gly-106 to Thr-108 lie on the Periplasmic side of the membrane.

The protein belongs to the UPF0060 family.

The protein resides in the cell inner membrane. The sequence is that of UPF0060 membrane protein YnfA from Escherichia coli (strain SMS-3-5 / SECEC).